The primary structure comprises 470 residues: MAATATEKLPQLKSAVDGLTEMSENEKSGFINLVSRYLSGEAQHIEWSKIQTPTDEIVVPYDKMANVSEDASETKYLLDKLVVLKLNGGLGTTMGCTGPKSVIEVRDGLTFLDLIVIQIENLNNKYNCKVPLVLMNSFNTHDDTQKIVEKYTKSNVDIHTFNQSKYPRVVADEFVPWPSKGKTDKDGWYPPGHGDVFPSLMNSGKLDAFLSQGKEYVFIANSDNLGAIVDLKILKHLIQNKNEYCMEVTPKTLADVKGGTLISYEGKVQLLEIAQVPDEHVNEFKSIEKFKIFNTNNLWVNLKAIKKLVEADALKMEIIPNPKEVDGVKVLQLETAAGAAIRFFDNAIGVNVPRSRFLPVKATSDLLLVQSDLYTLVDGFVTRNKARTNPTNPAIELGPEFKKVASFLSRFKSIPSIVELDSLKVSGDVWFGSGVVLKGKVTVKANAGTKLEIPDNAVLENKDINGPEDL.

Position 2 is an N-acetylalanine (A2). Residues 86–89 (LNGG), K100, Q163, and G192 contribute to the UTP site. A substrate-binding site is contributed by 88 to 89 (GG). Residues H193 and 221 to 223 (NSD) contribute to the substrate site. The UTP site is built by D223 and K361.

It belongs to the UDPGP type 1 family. In terms of tissue distribution, expressed in roots, rosette leaves, cauline leaves, stems, flowers and siliques.

It is found in the cytoplasm. The catalysed reaction is alpha-D-glucose 1-phosphate + UTP + H(+) = UDP-alpha-D-glucose + diphosphate. Its function is as follows. Converts glucose 1-phosphate to UDP-glucose, which is the major glycosyl donor for polysaccharides. Acts redundantly with UGP2 and is essential for the synthesis of sucrose, starch and cell wall, and callose deposition. Involved in the regulation of the programmed cell death (PCD) induced by the fungal toxin fumonisin B1 (FB1). In Arabidopsis thaliana (Mouse-ear cress), this protein is UTP--glucose-1-phosphate uridylyltransferase 1.